Reading from the N-terminus, the 289-residue chain is D-xylonolactone lactonase (289 aa).

Glu17 is a binding site for Fe(2+). Positions 98, 100, 119, and 145 each coordinate D-xylono-1,5-lactone. Residues Asn145 and Asp195 each contribute to the Fe(2+) site. The active-site Proton donor/acceptor is the Asp195.

It belongs to the SMP-30/CGR1 family. Fe(2+) is required as a cofactor.

It carries out the reaction D-xylono-1,5-lactone + H2O = D-xylonate + H(+). Its function is as follows. Involved in the degradation of D-xylose. Catalyzes the hydrolysis of D-xylonolactone to D-xylonate. This is D-xylonolactone lactonase from Caulobacter vibrioides (strain ATCC 19089 / CIP 103742 / CB 15) (Caulobacter crescentus).